Consider the following 384-residue polypeptide: S-adenosylmethionine synthase (384 aa).

ATP is bound at residue His-15. Asp-17 provides a ligand contact to Mg(2+). Glu-43 serves as a coordination point for K(+). L-methionine is bound by residues Glu-56 and Gln-99. The flexible loop stretch occupies residues 99 to 109 (QSADINQGVDR). Residues 164–166 (DAK), 230–231 (RF), Asp-239, 245–246 (RK), Ala-262, and Lys-266 each bind ATP. L-methionine is bound at residue Asp-239. Residue Lys-270 participates in L-methionine binding.

The protein belongs to the AdoMet synthase family. Homotetramer; dimer of dimers. Mg(2+) is required as a cofactor. The cofactor is K(+).

The protein resides in the cytoplasm. The catalysed reaction is L-methionine + ATP + H2O = S-adenosyl-L-methionine + phosphate + diphosphate. It functions in the pathway amino-acid biosynthesis; S-adenosyl-L-methionine biosynthesis; S-adenosyl-L-methionine from L-methionine: step 1/1. In terms of biological role, catalyzes the formation of S-adenosylmethionine (AdoMet) from methionine and ATP. The overall synthetic reaction is composed of two sequential steps, AdoMet formation and the subsequent tripolyphosphate hydrolysis which occurs prior to release of AdoMet from the enzyme. The sequence is that of S-adenosylmethionine synthase from Haemophilus influenzae (strain PittEE).